An 882-amino-acid chain; its full sequence is Alanine--tRNA ligase (882 aa).

4 residues coordinate Zn(2+): H568, H572, C670, and H674.

It belongs to the class-II aminoacyl-tRNA synthetase family. Zn(2+) serves as cofactor.

It is found in the cytoplasm. The catalysed reaction is tRNA(Ala) + L-alanine + ATP = L-alanyl-tRNA(Ala) + AMP + diphosphate. Catalyzes the attachment of alanine to tRNA(Ala) in a two-step reaction: alanine is first activated by ATP to form Ala-AMP and then transferred to the acceptor end of tRNA(Ala). Also edits incorrectly charged Ser-tRNA(Ala) and Gly-tRNA(Ala) via its editing domain. The polypeptide is Alanine--tRNA ligase (Syntrophotalea carbinolica (strain DSM 2380 / NBRC 103641 / GraBd1) (Pelobacter carbinolicus)).